Consider the following 302-residue polypeptide: Protein FLOURY 1 (302 aa).

2 helical membrane passes run 27–47 (SAGA…VAVL) and 82–102 (LAGS…FLAV). A disordered region spans residues 160–195 (SSKPVSRSLAAEFDQEADGEEEDNAGETSDPDDGSV). The segment covering 172–192 (FDQEADGEEEDNAGETSDPDD) has biased composition (acidic residues). The region spanning 193 to 299 (GSVQYLRRRL…ALSETSEDDR (107 aa)) is the GTD-binding domain. Positions 199 to 254 (RRRLKEEMLLKEVALEELEKERHAAASAADEAMSKIACLRSEKALVEREARQFQEM) form a coiled coil. Positions 283-302 (PEAITDRALSETSEDDRDKK) are disordered.

Interacts (via C-terminus) with both 22 kDa and 19 kDa alpha-zeins. Interacts (via C-terminus) with OP10 (via N-terminus). In terms of tissue distribution, expressed in endosperm. Not detected in embryo, leaves and roots.

It is found in the endoplasmic reticulum membrane. Involved in protein body development and 22 kDa alpha-zein localization. In Zea mays (Maize), this protein is Protein FLOURY 1.